We begin with the raw amino-acid sequence, 193 residues long: MAVFLLKRGVWASLMIGGFGPRAVLFSKLGQNHARLSQATPEKLETSNEEEGSSSAQITAGVESDAENQRAELSEETVEVVFLDRSGQRIPVKGKVGESVLCLAHRYNIELEGACESSLACSTCHVYVNTEYFHKLPEPDEREDDMLDMAPLLQENSRLGCQIILTKQLNGAEFTLPKITRNFYVDGHVPKPH.

The disordered stretch occupies residues Q38–R70. The 2Fe-2S ferredoxin-type domain occupies V78–T180. [2Fe-2S] cluster contacts are provided by C115, C121, C124, and C161.

It belongs to the adrenodoxin/putidaredoxin family. In terms of assembly, component of the mitochondrial core iron-sulfur cluster (ISC) complex composed of NFS1, LYRM4, NDUFAB1, ISCU, FXN, and FDX2; this complex is a heterohexamer containing two copies of each monomer. [2Fe-2S] cluster is required as a cofactor.

It localises to the mitochondrion. The protein resides in the mitochondrion matrix. Its function is as follows. Electron donor, of the core iron-sulfur cluster (ISC) assembly complex, that acts to reduce the persulfide into sulfide during [2Fe-2S] clusters assembly on the scaffolding protein ISCU. The core iron-sulfur cluster (ISC) assembly complex is involved in the de novo synthesis of a [2Fe-2S] cluster, the first step of the mitochondrial iron-sulfur protein biogenesis. This process is initiated by the cysteine desulfurase complex (NFS1:LYRM4:NDUFAB1) that produces persulfide which is delivered on the scaffold protein ISCU in a FXN-dependent manner. Then this complex is stabilized by FDX2 which provides reducing equivalents to accomplish the [2Fe-2S] cluster assembly. Finally, the [2Fe-2S] cluster is transferred from ISCU to chaperone proteins, including HSCB, HSPA9 and GLRX5. Essential for coenzyme Q biosynthesis: together with FDXR, transfers the electrons required for the hydroxylation reaction performed by COQ6. The sequence is that of Ferredoxin-2, mitochondrial from Xenopus laevis (African clawed frog).